The following is a 309-amino-acid chain: Homoserine kinase (309 aa).

91 to 101 (PIGSGLGSSAC) provides a ligand contact to ATP.

The protein belongs to the GHMP kinase family. Homoserine kinase subfamily.

It localises to the cytoplasm. It carries out the reaction L-homoserine + ATP = O-phospho-L-homoserine + ADP + H(+). It participates in amino-acid biosynthesis; L-threonine biosynthesis; L-threonine from L-aspartate: step 4/5. Catalyzes the ATP-dependent phosphorylation of L-homoserine to L-homoserine phosphate. This chain is Homoserine kinase, found in Erwinia tasmaniensis (strain DSM 17950 / CFBP 7177 / CIP 109463 / NCPPB 4357 / Et1/99).